A 131-amino-acid chain; its full sequence is Transcription antitermination protein NusB (131 aa).

It belongs to the NusB family.

Its function is as follows. Involved in transcription antitermination. Required for transcription of ribosomal RNA (rRNA) genes. Binds specifically to the boxA antiterminator sequence of the ribosomal RNA (rrn) operons. The chain is Transcription antitermination protein NusB from Bacillus subtilis (strain 168).